A 423-amino-acid chain; its full sequence is p-aminobenzoyl-glutamate hydrolase subunit A homolog (423 aa).

This sequence belongs to the peptidase M20 family. Mn(2+) serves as cofactor.

In terms of biological role, catalyzes the cleavage of p-aminobenzoyl-glutamate (PABA-GLU) to form p-aminobenzoate (PABA) and glutamate. This chain is p-aminobenzoyl-glutamate hydrolase subunit A homolog (abgA), found in Haemophilus influenzae (strain ATCC 51907 / DSM 11121 / KW20 / Rd).